The sequence spans 579 residues: Thiol:disulfide interchange protein DsbD (579 aa).

An N-terminal signal peptide occupies residues 1–16; it reads MKKLFLFFTLIFTAFA. 2 disulfide bridges follow: Cys-124–Cys-129 and Cys-193–Cys-315. Transmembrane regions (helical) follow at residues 178–198, 230–250, 254–274, 296–316, 337–357, 376–396, 397–417, and 420–440; these read IFGF…LPML, LTYT…QIAL, YVMI…FGLF, GAFG…SPCT, AATL…ITLF, FGFV…PEVW, EPRL…LQMS, and GFGY…VQPL. Positions 449–579 constitute a Thioredoxin domain; the sequence is TTTQSAVENK…AFSNWLKALH (131 aa). A disulfide bridge connects residues Cys-495 and Cys-498.

Belongs to the thioredoxin family. DsbD subfamily.

It localises to the cell inner membrane. It catalyses the reaction [protein]-dithiol + NAD(+) = [protein]-disulfide + NADH + H(+). It carries out the reaction [protein]-dithiol + NADP(+) = [protein]-disulfide + NADPH + H(+). Its function is as follows. Required to facilitate the formation of correct disulfide bonds in some periplasmic proteins and for the assembly of the periplasmic c-type cytochromes. Acts by transferring electrons from cytoplasmic thioredoxin to the periplasm. This transfer involves a cascade of disulfide bond formation and reduction steps. This is Thiol:disulfide interchange protein DsbD from Haemophilus influenzae (strain PittEE).